We begin with the raw amino-acid sequence, 311 residues long: Fucose-specific lectin (311 aa).

6 repeat units span residues 1 to 53, 54 to 103, 104 to 151, 152 to 209, 210 to 256, and 257 to 311. Residues 1–311 form a 6 X approximate tandem repeats region; that stretch reads MSTPGAQEVL…LGRRALPPAE (311 aa). Beta-L-fucose contacts are provided by arginine 25, glutamate 37, tryptophan 44, arginine 73, glutamate 85, tryptophan 94, arginine 126, glutamate 138, tryptophan 146, arginine 177, glutamine 189, tryptophan 198, arginine 230, glutamine 242, arginine 277, and glutamate 291.

It belongs to the fungal fucose-specific lectin family. In terms of assembly, homodimer.

Lectin that specifically binds to L-fucose and weakly reacts with mannose and N-acetyl-neuraminic acid. Has strongest preference for the alpha-1,6-fucosylated chain (core fucose) on glycoproteins among alpha-1,2-, alpha-1,3-, alpha-1,4-, and alpha-1,6-fucosylated chains. Binds to fucose residues of IgE in mice and human, causing antigen-independent IgE-mediated mast cell activation and anaphylactoid reactions in mice and is possibly implicated in allergic response to Aspergillus oryzae in humans. Induces secretion of pro-inflammatory cytokines IL6 and IL8 implicated in ocular diseases such as mycotic keratitis, probably through its interaction with host toll-like receptors TLR2 and TLR4, followed by up-regulation of pro-inflammatory cytokines. This Aspergillus oryzae (strain ATCC 42149 / RIB 40) (Yellow koji mold) protein is Fucose-specific lectin.